The following is a 625-amino-acid chain: DNA mismatch repair protein MutL (625 aa).

The segment at 404 to 427 (PPPRNAPQSTGMPSMAGTGLPATS) is disordered.

The protein belongs to the DNA mismatch repair MutL/HexB family.

In terms of biological role, this protein is involved in the repair of mismatches in DNA. It is required for dam-dependent methyl-directed DNA mismatch repair. May act as a 'molecular matchmaker', a protein that promotes the formation of a stable complex between two or more DNA-binding proteins in an ATP-dependent manner without itself being part of a final effector complex. The sequence is that of DNA mismatch repair protein MutL from Xanthomonas oryzae pv. oryzae (strain MAFF 311018).